Consider the following 435-residue polypeptide: Antho-RFamide neuropeptides type 1 (435 aa).

An N-terminal signal peptide occupies residues 1–22; the sequence is MTTVSYVTILLTVLVQVLTSDA. Residues 23–193 constitute a propeptide that is removed on maturation; it reads KATNNKRELS…SVPGRYGREL (171 aa). Residue Gln194 is modified to Pyrrolidone carboxylic acid. Phe197 carries the phenylalanine amide modification. Positions 199 to 201 are excised as a propeptide; the sequence is REL. Phe205 carries the phenylalanine amide modification. A propeptide spanning residues 207–209 is cleaved from the precursor; that stretch reads REA. At Phe213 the chain carries Phenylalanine amide. A propeptide spanning residues 215–217 is cleaved from the precursor; sequence REL. Position 221 is a phenylalanine amide (Phe221). The propeptide occupies 223–225; sequence REF. A Phenylalanine amide modification is found at Phe229. The span at 230 to 371 shows a compositional bias: basic and acidic residues; it reads GREDQGRFGR…EDIAEADQGR (142 aa). Disordered stretches follow at residues 230-374 and 386-435; these read GRED…RFGR and AKKR…AKTS. Positions 231-233 are excised as a propeptide; the sequence is RED. Position 237 is a phenylalanine amide (Phe237). The propeptide occupies 239 to 241; that stretch reads RED. At Phe245 the chain carries Phenylalanine amide. A propeptide spanning residues 247–249 is cleaved from the precursor; that stretch reads RED. At Phe253 the chain carries Phenylalanine amide. A propeptide spanning residues 255–257 is cleaved from the precursor; that stretch reads RED. At Phe261 the chain carries Phenylalanine amide. A propeptide spanning residues 263 to 265 is cleaved from the precursor; it reads RED. Phe269 bears the Phenylalanine amide mark. Positions 271–273 are excised as a propeptide; the sequence is RED. Phenylalanine amide is present on Phe277. A propeptide spanning residues 279 to 281 is cleaved from the precursor; that stretch reads REL. Phe285 bears the Phenylalanine amide mark. Positions 287–289 are excised as a propeptide; the sequence is REF. Phenylalanine amide is present on Phe293. The propeptide occupies 295 to 297; it reads RED. Position 301 is a phenylalanine amide (Phe301). The propeptide occupies 303-305; sequence RED. The residue at position 309 (Phe309) is a Phenylalanine amide. A propeptide spanning residues 311–313 is cleaved from the precursor; that stretch reads REL. Phe317 bears the Phenylalanine amide mark. The propeptide occupies 319 to 321; the sequence is RED. Phe325 is modified (phenylalanine amide). Positions 327–329 are excised as a propeptide; it reads RED. Phe333 carries the phenylalanine amide modification. The propeptide occupies 335–342; sequence REDLAKED. Position 346 is a phenylalanine amide (Phe346). Residues 348 to 355 constitute a propeptide that is removed on maturation; the sequence is REDLAKED. The residue at position 359 (Phe359) is a Phenylalanine amide. Residues 361–368 constitute a propeptide that is removed on maturation; it reads REDIAEAD. Residue Phe372 is modified to Phenylalanine amide. The propeptide occupies 374–435; sequence RNAAAAAAAA…KSDDALAKTS (62 aa). Basic and acidic residues predominate over residues 398–435; sequence SDPKPQTRFRDGKDMQEKRKVEKKDKIEKSDDALAKTS.

Belongs to the FARP (FMRFamide related peptide) family.

The protein resides in the secreted. Not known but it could act as a transmitter at neuromuscular synapses. The protein is Antho-RFamide neuropeptides type 1 of Anthopleura elegantissima (Green aggregating anemone).